Here is an 894-residue protein sequence, read N- to C-terminus: DNA mismatch repair protein MutS (894 aa).

632–639 (GPNMGGKS) contacts ATP.

The protein belongs to the DNA mismatch repair MutS family.

This protein is involved in the repair of mismatches in DNA. It is possible that it carries out the mismatch recognition step. This protein has a weak ATPase activity. The chain is DNA mismatch repair protein MutS from Paraburkholderia xenovorans (strain LB400).